We begin with the raw amino-acid sequence, 510 residues long: ATP synthase subunit alpha (510 aa).

169 to 176 (GDRQTGKT) contacts ATP.

Belongs to the ATPase alpha/beta chains family. F-type ATPases have 2 components, CF(1) - the catalytic core - and CF(0) - the membrane proton channel. CF(1) has five subunits: alpha(3), beta(3), gamma(1), delta(1), epsilon(1). CF(0) has four main subunits: a(1), b(1), b'(1) and c(9-12).

The protein resides in the cell inner membrane. It catalyses the reaction ATP + H2O + 4 H(+)(in) = ADP + phosphate + 5 H(+)(out). Functionally, produces ATP from ADP in the presence of a proton gradient across the membrane. The alpha chain is a regulatory subunit. In Rhodopseudomonas palustris (strain BisB18), this protein is ATP synthase subunit alpha.